A 226-amino-acid polypeptide reads, in one-letter code: Cytidylate kinase (226 aa).

Position 10 to 18 (10 to 18) interacts with ATP; that stretch reads GPASSGKST.

Its subcellular location is the cytoplasm. It catalyses the reaction CMP + ATP = CDP + ADP. It carries out the reaction dCMP + ATP = dCDP + ADP. This chain is Cytidylate kinase, found in Streptococcus pyogenes serotype M6 (strain ATCC BAA-946 / MGAS10394).